The sequence spans 529 residues: uncharacterized protein (529 aa).

This sequence to M.jannaschii MJ1451.

This is an uncharacterized protein from Methanothermobacter thermautotrophicus (strain ATCC 29096 / DSM 1053 / JCM 10044 / NBRC 100330 / Delta H) (Methanobacterium thermoautotrophicum).